A 467-amino-acid chain; its full sequence is Argininosuccinate lyase (467 aa).

It belongs to the lyase 1 family. Argininosuccinate lyase subfamily.

The protein resides in the cytoplasm. It carries out the reaction 2-(N(omega)-L-arginino)succinate = fumarate + L-arginine. It participates in amino-acid biosynthesis; L-arginine biosynthesis; L-arginine from L-ornithine and carbamoyl phosphate: step 3/3. The chain is Argininosuccinate lyase from Thioalkalivibrio sulfidiphilus (strain HL-EbGR7).